A 154-amino-acid polypeptide reads, in one-letter code: NADPH-dependent 7-cyano-7-deazaguanine reductase (154 aa).

Over residues Met-1–Glu-23 the composition is skewed to polar residues. The tract at residues Met-1 to Val-26 is disordered. The active-site Thioimide intermediate is Cys-52. Asp-59 functions as the Proton donor in the catalytic mechanism. Substrate is bound by residues Val-74 to Ser-76 and His-93 to Glu-94.

Belongs to the GTP cyclohydrolase I family. QueF type 1 subfamily.

The protein resides in the cytoplasm. The enzyme catalyses 7-aminomethyl-7-carbaguanine + 2 NADP(+) = 7-cyano-7-deazaguanine + 2 NADPH + 3 H(+). Its pathway is tRNA modification; tRNA-queuosine biosynthesis. Its function is as follows. Catalyzes the NADPH-dependent reduction of 7-cyano-7-deazaguanine (preQ0) to 7-aminomethyl-7-deazaguanine (preQ1). This Rhizobium leguminosarum bv. trifolii (strain WSM2304) protein is NADPH-dependent 7-cyano-7-deazaguanine reductase.